The primary structure comprises 246 residues: tRNA pseudouridine synthase A (246 aa).

Aspartate 52 functions as the Nucleophile in the catalytic mechanism. Tyrosine 111 lines the substrate pocket.

It belongs to the tRNA pseudouridine synthase TruA family. As to quaternary structure, homodimer.

The catalysed reaction is uridine(38/39/40) in tRNA = pseudouridine(38/39/40) in tRNA. Functionally, formation of pseudouridine at positions 38, 39 and 40 in the anticodon stem and loop of transfer RNAs. In Ehrlichia ruminantium (strain Welgevonden), this protein is tRNA pseudouridine synthase A.